The primary structure comprises 656 residues: Nuclear pore complex protein Nup85 (656 aa).

N-acetylmethionine is present on Met1. Lys92 carries the N6-acetyllysine modification. Ser223 carries the phosphoserine modification.

The protein belongs to the nucleoporin Nup85 family. Component of the nuclear pore complex (NPC). Component of the NPC Nup107-160 subcomplex, consisting of at least NUP107, NUP98/Nup96, NUP160, NUP133, NUP85, NUP37, NUP43 and SEC13. Interacts with NUP160, NUP133 and SEC13. Interacts with NUP37, NUP107 and NUP43. Interacts with CCR2.

It is found in the nucleus. The protein localises to the nuclear pore complex. The protein resides in the chromosome. It localises to the centromere. Its subcellular location is the kinetochore. It is found in the cytoplasm. The protein localises to the cytoskeleton. The protein resides in the spindle. It localises to the nucleus membrane. In terms of biological role, essential component of the nuclear pore complex (NPC) that seems to be required for NPC assembly and maintenance. As part of the NPC Nup107-160 subcomplex plays a role in RNA export and in tethering NUP96/Nup98 and NUP153 to the nucleus. The Nup107-160 complex seems to be required for spindle assembly during mitosis. NUP85 is required for membrane clustering of CCL2-activated CCR2. Seems to be involved in CCR2-mediated chemotaxis of monocytes and may link activated CCR2 to the phosphatidyl-inositol 3-kinase-Rac-lammellipodium protrusion cascade. Involved in nephrogenesis. In Homo sapiens (Human), this protein is Nuclear pore complex protein Nup85 (NUP85).